A 438-amino-acid polypeptide reads, in one-letter code: Thymidine phosphorylase (438 aa).

The protein belongs to the thymidine/pyrimidine-nucleoside phosphorylase family. In terms of assembly, homodimer.

The catalysed reaction is thymidine + phosphate = 2-deoxy-alpha-D-ribose 1-phosphate + thymine. The protein operates within pyrimidine metabolism; dTMP biosynthesis via salvage pathway; dTMP from thymine: step 1/2. Its function is as follows. The enzymes which catalyze the reversible phosphorolysis of pyrimidine nucleosides are involved in the degradation of these compounds and in their utilization as carbon and energy sources, or in the rescue of pyrimidine bases for nucleotide synthesis. In Burkholderia cenocepacia (strain ATCC BAA-245 / DSM 16553 / LMG 16656 / NCTC 13227 / J2315 / CF5610) (Burkholderia cepacia (strain J2315)), this protein is Thymidine phosphorylase.